The chain runs to 154 residues: 3-hydroxyacyl-[acyl-carrier-protein] dehydratase FabZ (154 aa).

His-54 is an active-site residue.

It belongs to the thioester dehydratase family. FabZ subfamily.

It is found in the cytoplasm. It catalyses the reaction a (3R)-hydroxyacyl-[ACP] = a (2E)-enoyl-[ACP] + H2O. Involved in unsaturated fatty acids biosynthesis. Catalyzes the dehydration of short chain beta-hydroxyacyl-ACPs and long chain saturated and unsaturated beta-hydroxyacyl-ACPs. This chain is 3-hydroxyacyl-[acyl-carrier-protein] dehydratase FabZ, found in Chlamydia caviae (strain ATCC VR-813 / DSM 19441 / 03DC25 / GPIC) (Chlamydophila caviae).